The sequence spans 429 residues: Glutamate-1-semialdehyde 2,1-aminomutase 1 (429 aa).

K268 carries the N6-(pyridoxal phosphate)lysine modification.

It belongs to the class-III pyridoxal-phosphate-dependent aminotransferase family. HemL subfamily. Homodimer. Pyridoxal 5'-phosphate serves as cofactor.

It localises to the cytoplasm. The catalysed reaction is (S)-4-amino-5-oxopentanoate = 5-aminolevulinate. It functions in the pathway porphyrin-containing compound metabolism; protoporphyrin-IX biosynthesis; 5-aminolevulinate from L-glutamyl-tRNA(Glu): step 2/2. The polypeptide is Glutamate-1-semialdehyde 2,1-aminomutase 1 (Staphylococcus haemolyticus (strain JCSC1435)).